We begin with the raw amino-acid sequence, 154 residues long: Ribonuclease H (154 aa).

An RNase H type-1 domain is found at 1–142 (MLKKIDLYTD…CDELAREAAS (142 aa)). Mg(2+) contacts are provided by Asp10, Glu48, Asp70, and Asp134. The disordered stretch occupies residues 133–154 (CDELAREAASGKQLAEDTGYQP).

It belongs to the RNase H family. As to quaternary structure, monomer. The cofactor is Mg(2+).

It is found in the cytoplasm. It catalyses the reaction Endonucleolytic cleavage to 5'-phosphomonoester.. Endonuclease that specifically degrades the RNA of RNA-DNA hybrids. The polypeptide is Ribonuclease H (Aeromonas hydrophila subsp. hydrophila (strain ATCC 7966 / DSM 30187 / BCRC 13018 / CCUG 14551 / JCM 1027 / KCTC 2358 / NCIMB 9240 / NCTC 8049)).